A 157-amino-acid chain; its full sequence is Large ribosomal subunit protein uL15 (157 aa).

A disordered region spans residues 1–56; the sequence is MRLEDIRPQPGSTRRRRRLGRGIAAGQGASCGKGMRGQKARKGGGPRPGFEGGQTP. A compositionally biased stretch (gly residues) spans 23-35; the sequence is IAAGQGASCGKGM.

This sequence belongs to the universal ribosomal protein uL15 family. As to quaternary structure, part of the 50S ribosomal subunit.

In terms of biological role, binds to the 23S rRNA. The chain is Large ribosomal subunit protein uL15 from Synechococcus sp. (strain JA-3-3Ab) (Cyanobacteria bacterium Yellowstone A-Prime).